The sequence spans 710 residues: Polyribonucleotide nucleotidyltransferase (710 aa).

Mg(2+) contacts are provided by D487 and D493. Residues 554–613 enclose the KH domain; that stretch reads PRIEVMNIPVDKIREVIGSGGKVIREIVEKTGAKINIEDDGTVKIASSSGKEIEAARKWI. The region spanning 623 to 691 is the S1 motif domain; the sequence is GQIYEGTVVK…ERGKVRLSMK (69 aa).

The protein belongs to the polyribonucleotide nucleotidyltransferase family. It depends on Mg(2+) as a cofactor.

It localises to the cytoplasm. The catalysed reaction is RNA(n+1) + phosphate = RNA(n) + a ribonucleoside 5'-diphosphate. In terms of biological role, involved in mRNA degradation. Catalyzes the phosphorolysis of single-stranded polyribonucleotides processively in the 3'- to 5'-direction. In Rhizobium rhizogenes (strain K84 / ATCC BAA-868) (Agrobacterium radiobacter), this protein is Polyribonucleotide nucleotidyltransferase.